Reading from the N-terminus, the 395-residue chain is Guanine nucleotide-binding protein subunit beta-5b (395 aa).

7 WD repeats span residues Gly103 to Ala142, Met145 to Leu184, Met193 to His234, Gly235 to Ser276, Thr279 to Ile318, Ser320 to Ile362, and Gly365 to Ala395.

The protein belongs to the WD repeat G protein beta family. May interact with RGS9; this interaction stabilizes both proteins and increases RGS9 GTPase-activating protein (GAP) activity, hence accelerating the deactivation of D(2) dopamine receptor-mediated signaling.

The protein resides in the membrane. Its function is as follows. Enhances GTPase-activating protein (GAP) activity of regulator of G protein signaling (RGS) proteins, such as RGS7 and RGS9, hence involved in the termination of the signaling initiated by the G protein coupled receptors (GPCRs) by accelerating the GTP hydrolysis on the G-alpha subunits, thereby promoting their inactivation. Increases RGS7 GTPase-activating protein (GAP) activity, thereby regulating mood and cognition. Increases RGS9 GTPase-activating protein (GAP) activity, hence contributes to the deactivation of G protein signaling initiated by D(2) dopamine receptors. Along with gnb5a, plays an important role in neuronal signaling, including in the parasympathetic, but not sympathetic, control of heart rate. This is Guanine nucleotide-binding protein subunit beta-5b from Danio rerio (Zebrafish).